Consider the following 297-residue polypeptide: Homoserine kinase (297 aa).

82 to 92 (PLTRGLGSSAS) serves as a coordination point for ATP.

This sequence belongs to the GHMP kinase family. Homoserine kinase subfamily.

The protein localises to the cytoplasm. It carries out the reaction L-homoserine + ATP = O-phospho-L-homoserine + ADP + H(+). It functions in the pathway amino-acid biosynthesis; L-threonine biosynthesis; L-threonine from L-aspartate: step 4/5. Functionally, catalyzes the ATP-dependent phosphorylation of L-homoserine to L-homoserine phosphate. This Bacillus cereus (strain B4264) protein is Homoserine kinase.